The primary structure comprises 398 residues: 1-deoxy-D-xylulose 5-phosphate reductoisomerase (398 aa).

NADPH contacts are provided by Thr10, Gly11, Ser12, Ile13, Lys37, Asn38, and Asn124. Lys125 is a binding site for 1-deoxy-D-xylulose 5-phosphate. Glu126 serves as a coordination point for NADPH. Residue Asp150 participates in Mn(2+) binding. Ser151, Glu152, Ser186, and His209 together coordinate 1-deoxy-D-xylulose 5-phosphate. Position 152 (Glu152) interacts with Mn(2+). Gly215 serves as a coordination point for NADPH. Residues Ser222, Asn227, Lys228, and Glu231 each contribute to the 1-deoxy-D-xylulose 5-phosphate site. Glu231 contacts Mn(2+).

Belongs to the DXR family. Homodimer. The cofactor is Mg(2+). Mn(2+) is required as a cofactor.

It carries out the reaction 2-C-methyl-D-erythritol 4-phosphate + NADP(+) = 1-deoxy-D-xylulose 5-phosphate + NADPH + H(+). It functions in the pathway isoprenoid biosynthesis; isopentenyl diphosphate biosynthesis via DXP pathway; isopentenyl diphosphate from 1-deoxy-D-xylulose 5-phosphate: step 1/6. Functionally, catalyzes the NADPH-dependent rearrangement and reduction of 1-deoxy-D-xylulose-5-phosphate (DXP) to 2-C-methyl-D-erythritol 4-phosphate (MEP). This Buchnera aphidicola subsp. Acyrthosiphon pisum (strain 5A) protein is 1-deoxy-D-xylulose 5-phosphate reductoisomerase.